We begin with the raw amino-acid sequence, 271 residues long: Acetyl-coenzyme A carboxylase carboxyl transferase subunit alpha (271 aa).

The region spanning 1 to 247 is the CoA carboxyltransferase C-terminal domain; that stretch reads MSRELIRTAD…KKTILEALGE (247 aa).

Belongs to the AccA family. Acetyl-CoA carboxylase is a heterohexamer composed of biotin carboxyl carrier protein (AccB), biotin carboxylase (AccC) and two subunits each of ACCase subunit alpha (AccA) and ACCase subunit beta (AccD).

The protein resides in the cytoplasm. The enzyme catalyses N(6)-carboxybiotinyl-L-lysyl-[protein] + acetyl-CoA = N(6)-biotinyl-L-lysyl-[protein] + malonyl-CoA. It functions in the pathway lipid metabolism; malonyl-CoA biosynthesis; malonyl-CoA from acetyl-CoA: step 1/1. Functionally, component of the acetyl coenzyme A carboxylase (ACC) complex. First, biotin carboxylase catalyzes the carboxylation of biotin on its carrier protein (BCCP) and then the CO(2) group is transferred by the carboxyltransferase to acetyl-CoA to form malonyl-CoA. The sequence is that of Acetyl-coenzyme A carboxylase carboxyl transferase subunit alpha from Clostridium perfringens (strain ATCC 13124 / DSM 756 / JCM 1290 / NCIMB 6125 / NCTC 8237 / Type A).